Reading from the N-terminus, the 210-residue chain is MASGVFGTPISAQTVIATGEYKEPITQKDVADYAMKMINAGGKDVNAQKFVDNLKERYGNGIAVKCLLYNATGATLNFAKYNDWHGHIYDTPYPSDIQNGQWGAFLHVHPSGAAAGSAGAVVYRSKIPSSSSSCDWLFSWTVPYIGGNGVYTEIREEGHYPSVGSWDYIYNVKLKNSSVTSIDSNYGYVSKADIGEGTTMNARGVFEFPY.

This sequence belongs to the jasmonate-induced protein family.

The protein is 23 kDa jasmonate-induced protein of Hordeum vulgare (Barley).